We begin with the raw amino-acid sequence, 133 residues long: Fatty acid-binding protein (133 aa).

Belongs to the calycin superfamily. Fatty-acid binding protein (FABP) family.

This is Fatty acid-binding protein from Clonorchis sinensis (Chinese liver fluke).